Here is a 75-residue protein sequence, read N- to C-terminus: UPF0270 protein Avin_35000 (75 aa).

This sequence belongs to the UPF0270 family.

The sequence is that of UPF0270 protein Avin_35000 from Azotobacter vinelandii (strain DJ / ATCC BAA-1303).